The primary structure comprises 293 residues: ATP synthase gamma chain (293 aa).

This sequence belongs to the ATPase gamma chain family. As to quaternary structure, F-type ATPases have 2 components, CF(1) - the catalytic core - and CF(0) - the membrane proton channel. CF(1) has five subunits: alpha(3), beta(3), gamma(1), delta(1), epsilon(1). CF(0) has three main subunits: a, b and c.

It localises to the cell inner membrane. In terms of biological role, produces ATP from ADP in the presence of a proton gradient across the membrane. The gamma chain is believed to be important in regulating ATPase activity and the flow of protons through the CF(0) complex. The protein is ATP synthase gamma chain of Psychrobacter cryohalolentis (strain ATCC BAA-1226 / DSM 17306 / VKM B-2378 / K5).